A 4010-amino-acid polypeptide reads, in one-letter code: Extracellular matrix organizing protein FRAS1 (4010 aa).

Residues 1-25 (MGVLKAWLGVALALAEFAVLPNCEG) form the signal peptide. 5 consecutive VWFC domains span residues 26-87 (ACLY…PQCA), 92-152 (GSCH…PICV), 156-216 (KPCS…SQCS), 218-278 (RSCS…EECA), and 282-342 (RSCS…PECI). Residues 26-3903 (ACLYQGSFLA…AASLSQTGAS (3878 aa)) are Extracellular-facing. Serine 343 carries the post-translational modification Phosphoserine. The VWFC 6 domain occupies 358 to 416 (SSSAREIKHVPDGEKWEEGPCKLCECREAQVTCYEPSCPPCPVATLALVVKGQCCPDCT). 14 FU repeats span residues 408–459 (KGQC…GFYQ), 461–504 (GSLC…GFYQ), 506–552 (HHSC…GFYN), 554–598 (QGTC…GYYA), 601–646 (TGSC…GFYP), 648–704 (HGIC…HFYL), 707–752 (TGLC…THFN), 754–799 (EGTC…EQFL), 802–851 (VGYC…GHYK), 853–899 (RGTC…GHYL), 902–947 (NQVC…QYYL), 951–996 (TKTC…QHYR), 998–1041 (SGSC…GYFA), and 1045–1088 (KHRC…GFSG). Asparagine 727 carries N-linked (GlcNAc...) asparagine glycosylation. 2 N-linked (GlcNAc...) asparagine glycosylation sites follow: asparagine 1094 and asparagine 1107. CSPG repeat units follow at residues 1101 to 1196 (TPSL…LKIS), 1216 to 1307 (APYV…FQAN), 1328 to 1440 (ALRL…FQVS), 1465 to 1561 (APKL…FSFA), 1597 to 1691 (PAFQ…ISVT), 1712 to 1812 (GPRL…FSVS), and 1834 to 1938 (PPHI…FYVS). A glycan (N-linked (GlcNAc...) asparagine) is linked at asparagine 1506. Asparagine 1779 is a glycosylation site (N-linked (GlcNAc...) asparagine). N-linked (GlcNAc...) asparagine glycans are attached at residues asparagine 1950 and asparagine 1980. 5 CSPG repeats span residues 1959–2059 (EPPR…FSLT), 2080–2179 (IPHL…FDVV), 2201–2293 (PPVV…FVLS), 2313–2406 (ARPL…FTVS), and 2441–2538 (TPRI…FLVK). Calx-beta domains lie at 2545 to 2648 (VSDN…VGLS), 2661 to 2772 (AKVV…IALA), 2786 to 2892 (AKVL…VFLS), 2907 to 3009 (IAIN…VYLG), and 3027 to 3131 (ATVT…LVLG). Asparagine 2565, asparagine 2666, and asparagine 2684 each carry an N-linked (GlcNAc...) asparagine glycan. Asparagine 2910, asparagine 2987, asparagine 3072, asparagine 3220, asparagine 3678, and asparagine 3877 each carry an N-linked (GlcNAc...) asparagine glycan. A helical transmembrane segment spans residues 3904–3924 (IGSALAAIMLLLLLFLVACFV). The Cytoplasmic segment spans residues 3925–4010 (TRKCQKQKKK…HNNLQDGTEV (86 aa)).

This sequence belongs to the FRAS1 family.

Its subcellular location is the cell membrane. In terms of biological role, involved in extracellular matrix organization. Required for the regulation of epidermal-basement membrane adhesion responsible for proper organogenesis during embryonic development. Involved in brain organization and function. This Mus musculus (Mouse) protein is Extracellular matrix organizing protein FRAS1.